The sequence spans 158 residues: Glycine/sarcosine/betaine reductase complex component A1 (158 aa).

U44 is a catalytic residue. Residue U44 is a non-standard amino acid, selenocysteine.

This sequence belongs to the GrdA family. As to quaternary structure, monomer. Component of the glycine, sarcosine and betaine reductase complexes, together with components B and C.

It catalyses the reaction acetyl phosphate + [thioredoxin]-disulfide + NH4(+) + H2O = [thioredoxin]-dithiol + glycine + phosphate + H(+). The catalysed reaction is acetyl phosphate + methylamine + [thioredoxin]-disulfide + H2O = sarcosine + [thioredoxin]-dithiol + phosphate + H(+). The enzyme catalyses acetyl phosphate + trimethylamine + [thioredoxin]-disulfide + H2O = glycine betaine + [thioredoxin]-dithiol + phosphate + H(+). Functionally, in the first step of glycine, betaine and sarcosine reductases, the substrate is bound to component PB via a Schiff base intermediate. Then the PB-activated substrate is nucleophilically attacked by the selenol anion of component PA to transform it to a carboxymethylated selenoether and the respective amine. By action of component PC, acetyl phosphate is formed, leaving component PA in its oxidized state. Finally component PA becomes reduced by the thioredoxin system to start a new catalytic cycle of reductive deamination. The protein is Glycine/sarcosine/betaine reductase complex component A1 (grdA1) of Peptoclostridium acidaminophilum (Eubacterium acidaminophilum).